The chain runs to 388 residues: Chorismate synthase (388 aa).

The NADP(+) site is built by R39 and R45. Residues 132–134 (RSS), 251–252 (NA), G296, 311–315 (KPIPT), and R337 contribute to the FMN site.

This sequence belongs to the chorismate synthase family. Homotetramer. FMNH2 serves as cofactor.

The catalysed reaction is 5-O-(1-carboxyvinyl)-3-phosphoshikimate = chorismate + phosphate. The protein operates within metabolic intermediate biosynthesis; chorismate biosynthesis; chorismate from D-erythrose 4-phosphate and phosphoenolpyruvate: step 7/7. Functionally, catalyzes the anti-1,4-elimination of the C-3 phosphate and the C-6 proR hydrogen from 5-enolpyruvylshikimate-3-phosphate (EPSP) to yield chorismate, which is the branch point compound that serves as the starting substrate for the three terminal pathways of aromatic amino acid biosynthesis. This reaction introduces a second double bond into the aromatic ring system. The protein is Chorismate synthase of Staphylococcus aureus (strain MRSA252).